Consider the following 255-residue polypeptide: 14-3-3 protein 5 (255 aa).

The protein belongs to the 14-3-3 family. As to quaternary structure, homodimer.

The chain is 14-3-3 protein 5 (TFT5) from Solanum lycopersicum (Tomato).